The chain runs to 585 residues: Probable multidrug resistance ABC transporter ATP-binding/permease protein YheI (585 aa).

The region spanning 19-304 is the ABC transmembrane type-1 domain; the sequence is YTIAIVLLLA…IGELINVMQR (286 aa). Helical transmembrane passes span 21 to 41, 57 to 77, 127 to 147, 149 to 169, 249 to 269, and 279 to 299; these read IAIVLLLAVNVIEMFPPKLLG, LLFYIGIFFVLTAAVYIMSYF, AVSLTTGFGILTLVDSTMFMM, IFLTMGFLISWKLTFAAIIPL, VKLLVGASYLIGLGYGAFLVF, and VSFNVYLGMMIWPMFAIGELI. An ABC transporter domain is found at 337-572; the sequence is IVFSHVSFTY…NGWYREQYER (236 aa). 371–378 contacts ATP; the sequence is GKTGSGKT.

Belongs to the ABC transporter superfamily. As to quaternary structure, heterodimer composed of YheH and YheI.

It localises to the cell membrane. Its activity is regulated as follows. Inhibited by ortho-vanadate. Involved in the transport of four structurally unrelated drugs, including doxorubicin and mitoxantrone. Transmembrane domains (TMD) form a pore in the membrane and the ATP-binding domain (NBD) is responsible for energy generation. The protein is Probable multidrug resistance ABC transporter ATP-binding/permease protein YheI (yheI) of Bacillus subtilis (strain 168).